A 1510-amino-acid polypeptide reads, in one-letter code: Cysteine-tryptophan domain-containing zinc finger protein 5 (1510 aa).

Residues 174–196 show a composition bias toward polar residues; that stretch reads YCQRTSSENDSNHSQQLLNSGPE. Disordered regions lie at residues 174 to 198, 449 to 497, 555 to 574, and 582 to 616; these read YCQR…PEQK, SSLD…CAKD, KPNY…YVLD, and LHTE…DHKI. Basic and acidic residues predominate over residues 454–465; that stretch reads GFSHKTKSDKCN. Residues 467–476 show a composition bias toward polar residues; that stretch reads QPVTTSSQLQ. Basic and acidic residues-rich tracts occupy residues 479–497 and 556–574; these read PAKK…CAKD and PNYD…YVLD. A CW-type zinc finger spans residues 645–698; the sequence is SEPVDQWVCCDKCETWRLLPYGMNSDTLPKKWRCSMQSWLPGMNNCKLSEGETT. The Zn(2+) site is built by Cys-654, Cys-657, Cys-678, and Cys-690. Residues 768–780 are compositionally biased toward basic and acidic residues; it reads KQKRIESSDKGEK. Disordered regions lie at residues 768–893, 1003–1050, and 1149–1194; these read KQKR…RDLF, STAA…LDRH, and LPIH…VRPD. Over residues 781-790 the composition is skewed to polar residues; sequence STVTISSGQT. Over residues 874 to 893 the composition is skewed to basic and acidic residues; it reads NSDRGARASDAGKSDPRDLF. Residues 1003–1016 are compositionally biased toward low complexity; sequence STAATSSSSKVSSS. Composition is skewed to polar residues over residues 1026-1040 and 1162-1182; these read TRTS…SPLR and PDQN…QAKL.

Highly expressed in young panicles. Expressed at low levels in leaf sheaths, nodes, internodes and axillary buds.

It is found in the nucleus. In terms of biological role, binds to histones H3K4me1, H3K4me2 and H3K4me3 in GST pull-down assay. May facilitate the recruitment of effectors to mediate gene expression. This is Cysteine-tryptophan domain-containing zinc finger protein 5 from Oryza sativa subsp. japonica (Rice).